We begin with the raw amino-acid sequence, 374 residues long: Cyclin-dependent kinase 9 (374 aa).

One can recognise a Protein kinase domain in the interval 19–318 (YEKLAKIGQG…SDDALNHDFF (300 aa)). ATP contacts are provided by residues 25 to 33 (IGQGTFGEV) and Lys-48. The active-site Proton acceptor is Asp-151. Positions 345-374 (PRRRGHMPQQPANQNRNPATTSQSEFDRVF) are disordered. Residues 354 to 368 (QPANQNRNPATTSQS) are compositionally biased toward polar residues.

The protein belongs to the protein kinase superfamily. CMGC Ser/Thr protein kinase family. CDC2/CDKX subfamily. In terms of assembly, component of the super elongation complex (SEC). Associates with ccnt1/cyclin-T1, ccnt2/cyclin-T2 or ccnk/cyclin-K to form active P-TEFb.

Its subcellular location is the nucleus. The protein localises to the cytoplasm. The protein resides in the PML body. It carries out the reaction L-seryl-[protein] + ATP = O-phospho-L-seryl-[protein] + ADP + H(+). The catalysed reaction is L-threonyl-[protein] + ATP = O-phospho-L-threonyl-[protein] + ADP + H(+). The enzyme catalyses [DNA-directed RNA polymerase] + ATP = phospho-[DNA-directed RNA polymerase] + ADP + H(+). Protein kinase involved in the regulation of transcription. Member of the cyclin-dependent kinase pair (CDK9/cyclin-T) complex, also called positive transcription elongation factor b (P-TEFb), which facilitates the transition from abortive to productive elongation by phosphorylating the CTD (C-terminal domain) of the large subunit of RNA polymerase II (RNAP II) polr2a, supt5h and rdbp. This complex is inactive when in the 7SK snRNP complex form. Regulates cytokine inducible transcription networks by facilitating promoter recognition of target transcription factors. P-TEFb is also involved in cotranscriptional histone modification, mRNA processing and mRNA export. The sequence is that of Cyclin-dependent kinase 9 from Danio rerio (Zebrafish).